Here is a 132-residue protein sequence, read N- to C-terminus: Histone H2B.1 (132 aa).

Residues 1-13 (MSSKASKAPASKA) show a composition bias toward low complexity. Residues 1 to 40 (MSSKASKAPASKAPAEKKPAAKKTSSSVDASKKRTKTRKE) form a disordered region. The residue at position 7 (Lys7) is an N6-acetyllysine; alternate. Residue Lys7 forms a Glycyl lysine isopeptide (Lys-Gly) (interchain with G-Cter in SUMO); alternate linkage. The residue at position 11 (Ser11) is a Phosphoserine. Residue Lys12 is modified to N6-acetyllysine. N6-acetyllysine; alternate is present on Lys17. Lys17 participates in a covalent cross-link: Glycyl lysine isopeptide (Lys-Gly) (interchain with G-Cter in SUMO); alternate. Lys18 is covalently cross-linked (Glycyl lysine isopeptide (Lys-Gly) (interchain with G-Cter in SUMO)). Lys125 is covalently cross-linked (Glycyl lysine isopeptide (Lys-Gly) (interchain with G-Cter in ubiquitin)).

This sequence belongs to the histone H2B family. In terms of assembly, the nucleosome is a histone octamer containing two molecules each of H2A, H2B, H3 and H4 assembled in one H3-H4 heterotetramer and two H2A-H2B heterodimers. The octamer wraps approximately 147 bp of DNA. Post-translationally, monoubiquitinated by the UBC2-BRE1 complex to form H2BK123ub1. H2BK123ub1 gives a specific tag for epigenetic transcriptional activation and is also prerequisite for H3K4me and H3K79me formation. H2BK123ub1 also modulates the formation of double-strand breaks during meiosis and is a prerequisite for DNA-damage checkpoint activation. Phosphorylated by STE20 to form H2BS10ph during progression through meiotic prophase. May be correlated with chromosome condensation. In terms of processing, acetylated by GCN5 to form H2BK11ac and H2BK16ac. H2BK16ac can also be formed by ESA1. Acetylation of N-terminal lysines and particularly formation of H2BK11acK16ac has a positive effect on transcription. Post-translationally, sumoylation to form H2BK6su and probably also H2BK16su or H2BK17su, occurs preferentially near the telomeres and represses gene transcription.

Its subcellular location is the nucleus. It localises to the chromosome. Its function is as follows. Core component of nucleosome. Nucleosomes wrap and compact DNA into chromatin, limiting DNA accessibility to the cellular machineries which require DNA as a template. Histones thereby play a central role in transcription regulation, DNA repair, DNA replication and chromosomal stability. DNA accessibility is regulated via a complex set of post-translational modifications of histones, also called histone code, and nucleosome remodeling. The chain is Histone H2B.1 (HTB1) from Eremothecium gossypii (strain ATCC 10895 / CBS 109.51 / FGSC 9923 / NRRL Y-1056) (Yeast).